The chain runs to 248 residues: Tetraspanin-16 (248 aa).

The Cytoplasmic segment spans residues 1–7; sequence MSEIRTG. Residues 8–28 traverse the membrane as a helical segment; that stretch reads FLTMATIILICIGLTMTGTGL. Over 29-44 the chain is Extracellular; it reads YYRKTVSKCIRETDGS. The helical transmembrane segment at 45 to 65 threads the bilayer; it reads FVVIGLLLLVIPQFALYAICC. The Cytoplasmic segment spans residues 66–69; the sequence is HSKR. Residues 70–90 traverse the membrane as a helical segment; that stretch reads MFTIYIYAMIFVSIVLGGYSL. Residues 91 to 208 lie on the Extracellular side of the membrane; that stretch reads KCFIYNTTFG…MSILKAIVHQ (118 aa). Asn-96 and Asn-141 each carry an N-linked (GlcNAc...) asparagine glycan. A helical transmembrane segment spans residues 209-229; it reads WKYLSMFSYPALFLVCLSLAI. The Cytoplasmic segment spans residues 230–248; the sequence is SRSIMDTFDEPDDYRGYYS.

This sequence belongs to the tetraspanin (TM4SF) family.

The protein localises to the membrane. In terms of biological role, may be involved in the regulation of cell differentiation. This Arabidopsis thaliana (Mouse-ear cress) protein is Tetraspanin-16 (TET16).